A 268-amino-acid polypeptide reads, in one-letter code: Indole-3-glycerol phosphate synthase (268 aa).

Belongs to the TrpC family.

The enzyme catalyses 1-(2-carboxyphenylamino)-1-deoxy-D-ribulose 5-phosphate + H(+) = (1S,2R)-1-C-(indol-3-yl)glycerol 3-phosphate + CO2 + H2O. It participates in amino-acid biosynthesis; L-tryptophan biosynthesis; L-tryptophan from chorismate: step 4/5. This chain is Indole-3-glycerol phosphate synthase, found in Acinetobacter baumannii (strain SDF).